Reading from the N-terminus, the 93-residue chain is Putative pterin-4-alpha-carbinolamine dehydratase (93 aa).

Belongs to the pterin-4-alpha-carbinolamine dehydratase family.

It carries out the reaction (4aS,6R)-4a-hydroxy-L-erythro-5,6,7,8-tetrahydrobiopterin = (6R)-L-erythro-6,7-dihydrobiopterin + H2O. This Trichodesmium erythraeum (strain IMS101) protein is Putative pterin-4-alpha-carbinolamine dehydratase.